The following is a 428-amino-acid chain: 4-hydroxy-3-methylbut-2-en-1-yl diphosphate synthase (flavodoxin) (428 aa).

[4Fe-4S] cluster-binding residues include cysteine 315, cysteine 318, cysteine 361, and glutamate 368.

This sequence belongs to the IspG family. The cofactor is [4Fe-4S] cluster.

It catalyses the reaction (2E)-4-hydroxy-3-methylbut-2-enyl diphosphate + oxidized [flavodoxin] + H2O + 2 H(+) = 2-C-methyl-D-erythritol 2,4-cyclic diphosphate + reduced [flavodoxin]. It functions in the pathway isoprenoid biosynthesis; isopentenyl diphosphate biosynthesis via DXP pathway; isopentenyl diphosphate from 1-deoxy-D-xylulose 5-phosphate: step 5/6. Its function is as follows. Converts 2C-methyl-D-erythritol 2,4-cyclodiphosphate (ME-2,4cPP) into 1-hydroxy-2-methyl-2-(E)-butenyl 4-diphosphate. This is 4-hydroxy-3-methylbut-2-en-1-yl diphosphate synthase (flavodoxin) from Ralstonia pickettii (strain 12J).